The chain runs to 1444 residues: Adhesin P1 (1444 aa).

The signal sequence occupies residues 1–30; sequence MHQPKKRLAKKSWAFLTAALTLGVITGVGG. 3 disordered regions span residues 231–283, 845–885, and 927–949; these read QSSF…EVER, IPFE…ALPN, and GDSN…TNEG. Residues 240–257 are compositionally biased toward basic and acidic residues; sequence LQKDSPVKDSSKQGEKLS. Low complexity predominate over residues 258-272; sequence ETTASSMSSGMATST. Polar residues-rich tracts occupy residues 851 to 860 and 868 to 878; these read KPSNNSTPFD and VTPSGGSSKPT. Positions 933-946 are enriched in basic and acidic residues; it reads FNKDSEQKWDKTET. A helical membrane pass occupies residues 1353–1373; sequence VLPLIVTVPIVVIILSVTLGL. The tract at residues 1419–1444 is disordered; sequence NAPKKLKQATPTKPTPKTPPKPPVKQ. The span at 1431-1444 shows a compositional bias: pro residues; the sequence is KPTPKTPPKPPVKQ.

This sequence belongs to the adhesin P1 family.

The protein localises to the cell membrane. Functionally, the protein is the major adhesin mediating the attachment of this mycoplasma to the ciliated epithelium. The protein is Adhesin P1 (mgpA) of Mycoplasma genitalium (strain ATCC 33530 / DSM 19775 / NCTC 10195 / G37) (Mycoplasmoides genitalium).